Consider the following 275-residue polypeptide: 2,3,4,5-tetrahydropyridine-2,6-dicarboxylate N-succinyltransferase (275 aa).

Substrate is bound by residues R106 and D143.

It belongs to the transferase hexapeptide repeat family. As to quaternary structure, homotrimer.

The protein localises to the cytoplasm. The catalysed reaction is (S)-2,3,4,5-tetrahydrodipicolinate + succinyl-CoA + H2O = (S)-2-succinylamino-6-oxoheptanedioate + CoA. It participates in amino-acid biosynthesis; L-lysine biosynthesis via DAP pathway; LL-2,6-diaminopimelate from (S)-tetrahydrodipicolinate (succinylase route): step 1/3. The polypeptide is 2,3,4,5-tetrahydropyridine-2,6-dicarboxylate N-succinyltransferase (Pelagibacter ubique (strain HTCC1062)).